The primary structure comprises 510 residues: O-acetyltransferase pyr7 (510 aa).

This sequence belongs to the fumigaclavine B O-acetyltransferase family.

It participates in secondary metabolite biosynthesis; terpenoid biosynthesis. Functionally, O-acetyltransferase; part of the gene cluster that mediates the biosynthesis of pyripyropene A, a specific human acyl-coenzyme A:cholesterol acyltransferase 2 inhibitor. The first step of the pathway is the synthesis of nicotinyl-CoA from nicotinic acid by the nicotinic acid-CoA ligase pyr1. Nicotinyl-CoA is then a substrate of polyketide synthase pyr2 to produce 4-hydroxy-6-(3-pyridinyl)-2H-pyran-2-one (HPPO) which is further prenylated by the polyprenyl transferase pyr6 to yield farnesyl-HPPO. The next steps consist of an epoxidation of farnesyl-HPPO to epoxyfarnesyl-HPPO by FAD-dependent monooxygenase pyr5 and a cyclization of the terpenoid portion by the terpene cyclase pyr4 to yield deacetyl-pyripyropene E. The 2 cytochrome P450 monooxygenases pyr3 and pyr9, and the 2 acetyltransferases pyr7 and pyr8 are involved in the conversion of deacetyl-pyripyropene E into pyripyropene A through several cycles of oxidation and acetylation steps. Pyr7 acetylates deacetyl-pyripyropene E to pyripyropene E which is oxidized to 11-deacetyl-pyripyropene O by pyr3, which is in turn acetylated into pyripyropene O by pyr8. Pyripyropene O is then oxidized to deacetyl-pyripyropene A by pyr9. Deacetyl-pyripyropene A is finally acetylated to pyripyropene A by pyr8. In Aspergillus fumigatus (strain ATCC MYA-4609 / CBS 101355 / FGSC A1100 / Af293) (Neosartorya fumigata), this protein is O-acetyltransferase pyr7.